Consider the following 1588-residue polypeptide: Paternally-expressed gene 3 protein (1588 aa).

Positions 46–128 (HQRFRNLIYV…TLLENYKEMY (83 aa)) constitute an SCAN box domain. Disordered stretches follow at residues 128 to 231 (YQPE…YQNV), 265 to 304 (GHSH…RRGI), and 317 to 347 (KFIK…MSDD). The span at 129-142 (QPEDDNNSDVTSDD) shows a compositional bias: acidic residues. 4 stretches are compositionally biased toward basic and acidic residues: residues 143 to 152 (DMTRNRRESS), 160 to 181 (FSDR…DRWS), 205 to 224 (FEMD…RSQD), and 293 to 304 (PEAKKSTHRRGI). 3 C2H2-type zinc fingers span residues 452 to 474 (YVCD…QIMH), 505 to 527 (FECK…RKIH), and 563 to 585 (YECR…QKIH). Over residues 588-607 (DDKDNEREHERERERERGET) the composition is skewed to basic and acidic residues. Residues 588–608 (DDKDNEREHERERERERGETF) are disordered. The segment at 627 to 649 (YECKVCGETFLHSSSLKEHQKIH) adopts a C2H2-type 4 zinc-finger fold. Disordered stretches follow at residues 839-889 (VASK…SKNR) and 905-929 (QKSV…SSNV). A compositionally biased stretch (basic and acidic residues) spans 868 to 881 (LNDKRQKIPARENP). Residues 969-991 (YECQECGECFAHSSDLTEHQKIH) form a C2H2-type 5 zinc finger. The disordered stretch occupies residues 1056 to 1104 (EKSHGEESQGENTDGEETHSEETHGQETIEDPVIQGSDMEDPQKDDPDD). A compositionally biased stretch (basic and acidic residues) spans 1071 to 1082 (EETHSEETHGQE). 5 C2H2-type zinc fingers span residues 1107–1129 (YECE…QKVH), 1163–1185 (YECP…QRIH), 1225–1247 (IRCL…MRLH), 1282–1304 (FECA…VTVH), and 1332–1354 (YECK…KELH). The span at 1396–1415 (EPEVEAAEPEVEAAEPEVEA) shows a compositional bias: acidic residues. The disordered stretch occupies residues 1396-1495 (EPEVEAAEPE…GIEDPEEGED (100 aa)). A run of 7 repeats spans residues 1397 to 1403 (PEVEAAE), 1404 to 1410 (PEVEAAE), 1411 to 1417 (PEVEAAE), 1418 to 1422 (PNGEA), 1425 to 1429 (PDGEA), 1432 to 1436 (PIGEA), and 1439 to 1443 (PNGEA). Residues 1397-1417 (PEVEAAEPEVEAAEPEVEAAE) form a 3 X 7 AA repeat of P-E-V-E-A-A-E region. The segment at 1418-1443 (PNGEAEGPDGEAAEPIGEAGQPNGEA) is 4 X 5 AA repeat of P-X-G-E-A. Composition is skewed to acidic residues over residues 1449–1466 (DADE…ERAE) and 1475–1495 (PEGD…EGED). C2H2-type zinc fingers lie at residues 1505–1527 (YDCH…LKTH) and 1564–1586 (FKCD…QNTH).

Belongs to the krueppel C2H2-type zinc-finger protein family. Homodimer. Interacts with SIAH1A and SIAH2. Interacts with TRAF2. In terms of tissue distribution, brain, glial cells, astrocytes, embryo, placenta, testis, ovary and uterus. In the placenta it is found in the layer of villous cytotrophoblast cells while in the ovary it is found in the cells of the ovarian stroma including the thecal layers around the follicles. Expression is highly repressed in glioma cell lines.

The protein localises to the nucleus. Its subcellular location is the cytoplasm. Its function is as follows. Induces apoptosis in cooperation with SIAH1A. Acts as a mediator between p53/TP53 and BAX in a neuronal death pathway that is activated by DNA damage. Acts synergistically with TRAF2 and inhibits TNF induced apoptosis through activation of NF-kappa-B. Possesses a tumor suppressing activity in glioma cells. The chain is Paternally-expressed gene 3 protein (PEG3) from Homo sapiens (Human).